The following is a 230-amino-acid chain: MKKINAIILLSSLTSASVFAGAYVENREAYNLASDQGEVMLRVGYNFDMGAGIMLTNTYNFQREDELKHGYNEIEGWYPLFKPTDKLTIQPGGLINDKSIGSGGAVYLDVNYKFVPWFNLTVRNRYNHNNYSSTDLSGELDNNDTYEIGTYWNFKITDKFSYTFEPHYFMRVNDFNSSNGKDHHWEITNTFRYRINEHWLPYFELRWLDRNVEPYHREQNQIRIGTKYFF.

Residues 1 to 20 (MKKINAIILLSSLTSASVFA) form the signal peptide.

Belongs to the oligogalacturonate-specific porin KdgM (TC 1.B.35) family. OmpL subfamily.

Its subcellular location is the cell outer membrane. Its function is as follows. Outer membrane channel protein that allows an efficient diffusion of low-molecular-weight solutes such as small sugars and tetraglycine. However, the specific substrate recognized by the OmpL channel is unknown. This Escherichia coli (strain K12) protein is Porin OmpL (ompL).